A 205-amino-acid polypeptide reads, in one-letter code: Ribosomal RNA small subunit methyltransferase G (205 aa).

Residues Gly66, Phe71, 119–120 (IE), and Arg135 contribute to the S-adenosyl-L-methionine site.

It belongs to the methyltransferase superfamily. RNA methyltransferase RsmG family.

The protein resides in the cytoplasm. It catalyses the reaction guanosine(527) in 16S rRNA + S-adenosyl-L-methionine = N(7)-methylguanosine(527) in 16S rRNA + S-adenosyl-L-homocysteine. Specifically methylates the N7 position of guanine in position 527 of 16S rRNA. The chain is Ribosomal RNA small subunit methyltransferase G from Rhizobium leguminosarum bv. trifolii (strain WSM2304).